The following is a 134-amino-acid chain: uncharacterized protein (134 aa).

This is an uncharacterized protein from Homo sapiens (Human).